Consider the following 896-residue polypeptide: Histone-lysine N-methyltransferase CLF (896 aa).

2 disordered regions span residues 344-419 (DNLK…NRRI) and 459-514 (SGIK…DGCD). The span at 358–390 (GSSGQKTKSQQSESSSTARVSSESSESEVQLLS) shows a compositional bias: low complexity. Composition is skewed to polar residues over residues 391 to 400 (NKSPQHSPGL), 465 to 476 (VVSSQCNSPSTR), and 485 to 498 (QMEN…AQSD). The span at 504–514 (NNEHSATDGCD) shows a compositional bias: basic and acidic residues. The CXC domain occupies 633 to 732 (RKRITERKDQ…TLGVPNQRGD (100 aa)). Positions 747 to 862 (QRVLLGRSDV…AGEELFYDYR (116 aa)) constitute an SET domain. Y861 serves as a coordination point for S-adenosyl-L-methionine. A compositionally biased stretch (basic and acidic residues) spans 869 to 884 (PAWARKPEGPGAKDDA). The segment at 869–896 (PAWARKPEGPGAKDDAQPSTGRAKKLAH) is disordered.

Belongs to the class V-like SAM-binding methyltransferase superfamily. Histone-lysine methyltransferase family. EZ subfamily. Interacts with FIE1. Component of the polycomb repressive complex 2 (PRC2), composed of the core PRC2 components FIE2, EMF2B and EZ1. PRC2 methylates 'Lys-27' residues of histone H3 (H3K27me3), leading to transcriptional repression of the affected target gene. Widely expressed. Highly expressed in young panicle.

It carries out the reaction L-lysyl(27)-[histone H3] + 3 S-adenosyl-L-methionine = N(6),N(6),N(6)-trimethyl-L-lysyl(27)-[histone H3] + 3 S-adenosyl-L-homocysteine + 3 H(+). Its function is as follows. Polycomb group (PcG) protein. Catalytic subunit of some PcG multiprotein complex, which methylates 'Lys-27' of histone H3, leading to transcriptional repression of the affected target genes. PcG proteins act by forming multiprotein complexes, which are required to maintain the transcriptionally repressive state of homeotic genes throughout development. PcG proteins are not required to initiate repression, but to maintain it during later stages of development. Involved in the regulation of flowering. Represses flowering under long day (LD) conditions. Regulates the trimethylation on histone H3 'Lys-27' (H3K27me3) of the flowering regulators MADS14, MADS15, RFT1, EHD1, HD3A and LF. The sequence is that of Histone-lysine N-methyltransferase CLF from Oryza sativa subsp. japonica (Rice).